The chain runs to 184 residues: Dual specificity protein phosphatase 22 (184 aa).

A lipid anchor (N-myristoyl glycine) is attached at G2. Residues 4–144 (GMSQILPGLY…LQEFEKHEVH (141 aa)) form the Tyrosine-protein phosphatase domain. Residue C88 is the Phosphocysteine intermediate of the active site. A protein contacts are provided by L89, A90, V92, S93, and R94.

It belongs to the protein-tyrosine phosphatase family. Non-receptor class dual specificity subfamily. Monomer. Interacts with LCK; the interaction is direct. Interacts with UBR2; the interaction is direct. Post-translationally, myristoylation regulates subcellular location, and is necessary for activation of JNK.

It localises to the cytoplasm. The catalysed reaction is O-phospho-L-tyrosyl-[protein] + H2O = L-tyrosyl-[protein] + phosphate. The enzyme catalyses O-phospho-L-seryl-[protein] + H2O = L-seryl-[protein] + phosphate. It catalyses the reaction O-phospho-L-threonyl-[protein] + H2O = L-threonyl-[protein] + phosphate. In terms of biological role, dual specificity phosphatase; can dephosphorylate both phosphotyrosine and phosphoserine or phosphothreonine residues. Activates the JNK signaling pathway. Inhibits T-cell receptor signaling and T-cell mediated immune responses, acting, at least in part, by inducing degradation of E3 ubiquitin ligase UBR2. Dephosphorylates and thereby induces 'Lys-48'-linked ubiquitination of UBR2, leading to proteasomal degradation of UBR2. Dephosphorylates and thereby inactivates tyrosine kinase LCK. Inhibits UBR2-mediated 'Lys-63'-linked ubiquitination of LCK. May play a role in B-cell receptor (BCR) signaling and B-cell function. This Mus musculus (Mouse) protein is Dual specificity protein phosphatase 22 (Dusp22).